The following is a 493-amino-acid chain: Catalase A (493 aa).

Residues 1–24 are disordered; that stretch reads MKRKLTGLFGAPVSDRENSMTAGP. Catalysis depends on residues His-53 and Asn-126. Heme is bound at residue Tyr-336.

Belongs to the catalase family. As to quaternary structure, homodimer. Heme is required as a cofactor.

It carries out the reaction 2 H2O2 = O2 + 2 H2O. Functionally, decomposes hydrogen peroxide into water and oxygen; serves to protect cells from the toxic effects of hydrogen peroxide. The protein is Catalase A (katA) of Staphylococcus xylosus.